Here is a 159-residue protein sequence, read N- to C-terminus: bZIP transcription factor 11 (159 aa).

Positions 1 to 21 (MESSSSGTTSSTIQTSSGSEE) are enriched in low complexity. The segment at 1–47 (MESSSSGTTSSTIQTSSGSEESLMEQRKRKRMLSNRESARRSRMKKQ) is disordered. Positions 25–88 (EQRKRKRMLS…LTVEAENSVL (64 aa)) constitute a bZIP domain. The tract at residues 27 to 48 (RKRKRMLSNRESARRSRMKKQK) is basic motif. Positions 53–67 (LTAQVNHLKKENTEI) are leucine-zipper.

In terms of assembly, forms heterodimers with BZIP1, BZIP9, BZIP10, BZIP25 and BZIP63. Interacts with ADA2B. Highly expressed in stems and flowers. Expressed in root tips, cotyledons, leaf vasculature, embryos, apical parts of siliques and funiculi.

It is found in the nucleus. Its function is as follows. Transcription factor that binds to the DNA sequence 5'-ACTCAT-3' in target gene promoters. Promotes POX1/PRODH1 expression in response to hypoosmolarity stress. Positively regulates the expression of ASN1 and POX2/PRODH2 genes, which are involved in amino acid metabolism. Regulates several metabolic pathways such as myo-inositol, raffinose and trehalose. Regulates several trehalose metabolism genes, including TRE1, TPP5 and TPP6. Mediates recruitment of the histone acetylation machinery to activate auxin-induced transcription. Interacts with ADA2B adapter protein to promote ADA2B-mediated recruitment of SAGA-like histone acetyltransferase complexes to specific auxin-responsive genes. The chain is bZIP transcription factor 11 from Arabidopsis thaliana (Mouse-ear cress).